We begin with the raw amino-acid sequence, 336 residues long: tRNA-cytidine(32) 2-sulfurtransferase (336 aa).

Positions 1–42 (MNAPDTLTGLEANAPVTEEAPAASEAERKRAHTRREQKEQYE) are disordered. The PP-loop motif signature appears at 75–80 (SGGKDS). Residues Cys-150, Cys-153, and Cys-241 each coordinate [4Fe-4S] cluster. The interval 301–328 (PHGDIAFDEEPCSADSASNQTQRPSQTV) is disordered. Polar residues predominate over residues 315 to 328 (DSASNQTQRPSQTV).

This sequence belongs to the TtcA family. Homodimer. The cofactor is Mg(2+). Requires [4Fe-4S] cluster as cofactor.

The protein localises to the cytoplasm. The catalysed reaction is cytidine(32) in tRNA + S-sulfanyl-L-cysteinyl-[cysteine desulfurase] + AH2 + ATP = 2-thiocytidine(32) in tRNA + L-cysteinyl-[cysteine desulfurase] + A + AMP + diphosphate + H(+). Its pathway is tRNA modification. Its function is as follows. Catalyzes the ATP-dependent 2-thiolation of cytidine in position 32 of tRNA, to form 2-thiocytidine (s(2)C32). The sulfur atoms are provided by the cysteine/cysteine desulfurase (IscS) system. In Paraburkholderia phymatum (strain DSM 17167 / CIP 108236 / LMG 21445 / STM815) (Burkholderia phymatum), this protein is tRNA-cytidine(32) 2-sulfurtransferase.